A 72-amino-acid polypeptide reads, in one-letter code: Osmotically-inducible lipoprotein B (72 aa).

The N-terminal stretch at 1-23 (MFMTSKKMAAAVLAITVAMSLSA) is a signal peptide. C24 carries N-palmitoyl cysteine lipidation. Residue C24 is the site of S-diacylglycerol cysteine attachment.

Its subcellular location is the cell membrane. In terms of biological role, provides resistance to osmotic stress. May be important for stationary-phase survival. In Salmonella typhimurium (strain LT2 / SGSC1412 / ATCC 700720), this protein is Osmotically-inducible lipoprotein B (osmB).